The sequence spans 65 residues: Large ribosomal subunit protein bL35 (65 aa).

The protein belongs to the bacterial ribosomal protein bL35 family.

This is Large ribosomal subunit protein bL35 from Clostridium acetobutylicum (strain ATCC 824 / DSM 792 / JCM 1419 / IAM 19013 / LMG 5710 / NBRC 13948 / NRRL B-527 / VKM B-1787 / 2291 / W).